Here is a 544-residue protein sequence, read N- to C-terminus: MIARRMLCARPWGPSCVVCALCGALAALVPAVGAQEQAVPAPGTPAPPAHTASEAVPPAPEPRAEGEQPSPLVPTALPVPGGAVAARAAPGTVGPRLWEQLLQWRVQHGDEHQAPQMAYEIAANNYDIALVKSIVDLRMGTGHIHHNLNGNGAGGMANGTPTLSPYVHLFFPTYQNLSLKADIAIKTNTPSADVTALFGMDLYSKVRRQHQLQVRRARNSMLDAFAAHLRGQHAAREAFLAELDELLSAYSTLLEAQVTEQECTRLVRTMRIQRYQAHSVKLRSATLKHARAERVARRARKTFTALYQDFVRKCGAFEGNDPETFMLHLAQVVPQEPVSSTALLSVENDWEFLKNREDLETQAEARAVDAISYGFNVESGVGSEGKSLKRILANVRMDFPGGGFWLGLNLPYPQWSRVEVKFRLTWDPLSIKYQELSRQTLQLHERLSALKLQDAYEASERKVLGLRHTAESLGWEQEAALTELNILRRSAQTHQKWLERGAIGAHQHARAQHAYLQALITLAKINIKILKFNLETASSFRPVL.

The signal sequence occupies residues 1-34 (MIARRMLCARPWGPSCVVCALCGALAALVPAVGA). The segment at 38-69 (AVPAPGTPAPPAHTASEAVPPAPEPRAEGEQP) is disordered.

The protein belongs to the TP096X family.

This is an uncharacterized protein from Treponema pallidum (strain Nichols).